Consider the following 843-residue polypeptide: KN motif and ankyrin repeat domain-containing protein 2 (843 aa).

Positions 1-31 (MAQVLHVPAPFPGTPGQASPAAFPSKEPDPP) are disordered. Residues 1–72 (MAQVLHVPAP…AVQRRPRLGS (72 aa)) form an interaction with AIFM1 region. Phosphoserine occurs at positions 19, 83, 86, 89, and 92. Residue Arg105 is modified to Omega-N-methylarginine. Residues 161-182 (LAGVGLLPPTPRSSGLSTPVAP) are disordered. Thr170 carries the post-translational modification Phosphothreonine. Coiled coils occupy residues 183 to 234 (SAGH…QLKS) and 282 to 313 (DGEA…TQQV). Thr331 is subject to Phosphothreonine. Ser358 bears the Phosphoserine mark. The disordered stretch occupies residues 410–577 (TERSCTGAPR…VASGPDPEEE (168 aa)). A compositionally biased stretch (low complexity) spans 457-470 (AAASQDSQAADGAG). At Ser532 the chain carries Phosphoserine. Polar residues predominate over residues 547 to 561 (ATTSLEGPQLSQESQ). The stretch at 606 to 643 (RELKVAYTTVLQEWLRLACRSDAHPELVRRHLVTFRAM) is one ANK 0; degenerate repeat. An interaction with NCOA1 region spans residues 661–827 (TALHYSVSHA…YSRMNIKCSF (167 aa)). 5 ANK repeats span residues 673 to 703 (PVVR…TALA), 707 to 740 (TQDD…LAVS), 745 to 774 (DVVR…ACEH), 778 to 808 (EITG…ALDA), and 812 to 842 (EIAS…SSAE).

In terms of assembly, interacts (non-phosphorylated form) with NCOA1; NCOA2 AND NCOA3. Interacts with AIFM1. Interacts with ARHGDIA; the interaction is direct and may regulate the interaction of ARHGDIA with RHOA, RAC1 and CDC42. Interacts (via ANK repeats 1-5) with KIF21A (via residues 1148-1169). Post-translationally, phosphorylated by casein kinase II upon estrogen stimulation. Phosphorylation induces the release by KANK2 of NCOA1 and its translocation to the nucleus where NCOA1 can activate gene transcription. In terms of tissue distribution, widely expressed with highest levels in liver and skeletal muscle.

Its subcellular location is the cytoplasm. The protein localises to the mitochondrion. Involved in transcription regulation by sequestering in the cytoplasm nuclear receptor coactivators such as NCOA1, NCOA2 and NCOA3. Involved in regulation of caspase-independent apoptosis by sequestering the proapoptotic factor AIFM1 in mitochondria. Pro-apoptotic stimuli can induce its proteasomal degradation allowing the translocation of AIFM1 to the nucleus to induce apoptosis. Involved in the negative control of vitamin D receptor signaling pathway. Involved in actin stress fibers formation through its interaction with ARHGDIA and the regulation of the Rho signaling pathway. May thereby play a role in cell adhesion and migration, regulating for instance podocytes migration during development of the kidney. Through the Rho signaling pathway may also regulate cell proliferation. This chain is KN motif and ankyrin repeat domain-containing protein 2 (Kank2), found in Mus musculus (Mouse).